We begin with the raw amino-acid sequence, 119 residues long: Holo-[acyl-carrier-protein] synthase (119 aa).

Mg(2+)-binding residues include aspartate 8 and glutamate 58.

Belongs to the P-Pant transferase superfamily. AcpS family. Requires Mg(2+) as cofactor.

The protein resides in the cytoplasm. The catalysed reaction is apo-[ACP] + CoA = holo-[ACP] + adenosine 3',5'-bisphosphate + H(+). Functionally, transfers the 4'-phosphopantetheine moiety from coenzyme A to a Ser of acyl-carrier-protein. This chain is Holo-[acyl-carrier-protein] synthase, found in Bacillus cereus (strain G9842).